A 210-amino-acid polypeptide reads, in one-letter code: Holliday junction resolvase RecU (210 aa).

T87, D89, E102, and Q121 together coordinate Mg(2+).

Belongs to the RecU family. It depends on Mg(2+) as a cofactor.

Its subcellular location is the cytoplasm. The enzyme catalyses Endonucleolytic cleavage at a junction such as a reciprocal single-stranded crossover between two homologous DNA duplexes (Holliday junction).. In terms of biological role, endonuclease that resolves Holliday junction intermediates in genetic recombination. Cleaves mobile four-strand junctions by introducing symmetrical nicks in paired strands. Promotes annealing of linear ssDNA with homologous dsDNA. Required for DNA repair, homologous recombination and chromosome segregation. This chain is Holliday junction resolvase RecU, found in Lactobacillus delbrueckii subsp. bulgaricus (strain ATCC 11842 / DSM 20081 / BCRC 10696 / JCM 1002 / NBRC 13953 / NCIMB 11778 / NCTC 12712 / WDCM 00102 / Lb 14).